The chain runs to 101 residues: Urease subunit beta 1 (101 aa).

It belongs to the urease beta subunit family. As to quaternary structure, heterotrimer of UreA (gamma), UreB (beta) and UreC (alpha) subunits. Three heterotrimers associate to form the active enzyme.

The protein resides in the cytoplasm. It catalyses the reaction urea + 2 H2O + H(+) = hydrogencarbonate + 2 NH4(+). It participates in nitrogen metabolism; urea degradation; CO(2) and NH(3) from urea (urease route): step 1/1. In terms of biological role, disruption of the ure1 gene cluster suggests that it protects brucellae during their passage through the stomach. The major route of infection in human brucellosis is oral. The chain is Urease subunit beta 1 from Brucella abortus (strain 2308).